Consider the following 285-residue polypeptide: V-type proton ATPase subunit D (285 aa).

The segment covering 208-226 (QKTKENAEKADSVTKEEHQ) has biased composition (basic and acidic residues). The tract at residues 208–285 (QKTKENAEKA…ENDSDEEVIF (78 aa)) is disordered. Ser219 carries the post-translational modification Phosphoserine. The segment covering 227–236 (GGSNTLQQTK) has biased composition (polar residues). Residues 248-263 (VGKEVINEVENSKDDT) are compositionally biased toward basic and acidic residues. Residues 271-285 (TDDEEENDSDEEVIF) show a composition bias toward acidic residues.

Belongs to the V-ATPase D subunit family. V-ATPase is a heteromultimeric enzyme composed of a peripheral catalytic V1 complex (components A to H) attached to an integral membrane V0 proton pore complex (components: a, c, c', c'', d, e, f and VOA1).

The protein resides in the vacuole membrane. Its function is as follows. Subunit of the V1 complex of vacuolar(H+)-ATPase (V-ATPase), a multisubunit enzyme composed of a peripheral complex (V1) that hydrolyzes ATP and a membrane integral complex (V0) that translocates protons. V-ATPase is responsible for acidifying and maintaining the pH of intracellular compartments. This Schizosaccharomyces pombe (strain 972 / ATCC 24843) (Fission yeast) protein is V-type proton ATPase subunit D (vma8).